Consider the following 210-residue polypeptide: Isomeliandiol synthase ISM1 (210 aa).

Transmembrane regions (helical) follow at residues 17–37, 50–70, 107–127, 135–155, and 172–192; these read FTLH…TWFI, LLCW…YFVF, IEGM…YAIV, ILQF…FLTA, and YYVG…INFW. In terms of domain architecture, EXPERA spans 46–188; sequence GDRLLLCWWA…IWIIVPSLIA (143 aa).

The protein belongs to the EBP family.

Its subcellular location is the membrane. It catalyses the reaction 7,8-epoxymelianol = isomeliandiol. Its pathway is secondary metabolite biosynthesis; terpenoid biosynthesis. Isomerase involved in the biosynthesis of limonoids and quassinoids triterpene natural products such as ailanthone, chaparrinone, glaucarubinone and amarolide, allelopathic degraded triterpene lactones inhibiting the growth of other plants, and possessing antimalarial, antifeedant, insecticidal, anti-inflammatory and anticancer activities. Catalyzes the conversion of 7,8-epoxymelianol to isomeliandiol via skeletal rearrangements. This chain is Isomeliandiol synthase ISM1, found in Ailanthus altissima (Tree-of-heaven).